The primary structure comprises 428 residues: Adenylosuccinate synthetase (428 aa).

GTP is bound by residues 12–18 (GDEGKGK) and 40–42 (GHT). Catalysis depends on D13, which acts as the Proton acceptor. Mg(2+) is bound by residues D13 and G40. Residues 13-16 (DEGK), 38-41 (NAGH), T127, R141, Q222, T237, and R301 contribute to the IMP site. H41 functions as the Proton donor in the catalytic mechanism. 297–303 (TVTKRPR) contacts substrate. Residues R303, 329 to 331 (CLD), and 411 to 413 (SVG) each bind GTP.

The protein belongs to the adenylosuccinate synthetase family. As to quaternary structure, homodimer. Mg(2+) is required as a cofactor.

The protein localises to the cytoplasm. The enzyme catalyses IMP + L-aspartate + GTP = N(6)-(1,2-dicarboxyethyl)-AMP + GDP + phosphate + 2 H(+). The protein operates within purine metabolism; AMP biosynthesis via de novo pathway; AMP from IMP: step 1/2. In terms of biological role, plays an important role in the de novo pathway of purine nucleotide biosynthesis. Catalyzes the first committed step in the biosynthesis of AMP from IMP. The sequence is that of Adenylosuccinate synthetase from Levilactobacillus brevis (strain ATCC 367 / BCRC 12310 / CIP 105137 / JCM 1170 / LMG 11437 / NCIMB 947 / NCTC 947) (Lactobacillus brevis).